A 295-amino-acid polypeptide reads, in one-letter code: Pyridoxal 5'-phosphate synthase subunit PdxS (295 aa).

Asp-23 is a D-ribose 5-phosphate binding site. The active-site Schiff-base intermediate with D-ribose 5-phosphate is Lys-80. Gly-152 provides a ligand contact to D-ribose 5-phosphate. Residue Arg-164 participates in D-glyceraldehyde 3-phosphate binding. D-ribose 5-phosphate contacts are provided by residues Gly-213 and 234-235 (GS).

This sequence belongs to the PdxS/SNZ family. In terms of assembly, in the presence of PdxT, forms a dodecamer of heterodimers.

The catalysed reaction is aldehydo-D-ribose 5-phosphate + D-glyceraldehyde 3-phosphate + L-glutamine = pyridoxal 5'-phosphate + L-glutamate + phosphate + 3 H2O + H(+). The protein operates within cofactor biosynthesis; pyridoxal 5'-phosphate biosynthesis. Catalyzes the formation of pyridoxal 5'-phosphate from ribose 5-phosphate (RBP), glyceraldehyde 3-phosphate (G3P) and ammonia. The ammonia is provided by the PdxT subunit. Can also use ribulose 5-phosphate and dihydroxyacetone phosphate as substrates, resulting from enzyme-catalyzed isomerization of RBP and G3P, respectively. The chain is Pyridoxal 5'-phosphate synthase subunit PdxS from Methanopyrus kandleri (strain AV19 / DSM 6324 / JCM 9639 / NBRC 100938).